A 232-amino-acid chain; its full sequence is Large ribosomal subunit protein uL1 (232 aa).

Belongs to the universal ribosomal protein uL1 family. As to quaternary structure, part of the 50S ribosomal subunit.

Its function is as follows. Binds directly to 23S rRNA. The L1 stalk is quite mobile in the ribosome, and is involved in E site tRNA release. Protein L1 is also a translational repressor protein, it controls the translation of the L11 operon by binding to its mRNA. This is Large ribosomal subunit protein uL1 from Sinorhizobium fredii (strain NBRC 101917 / NGR234).